We begin with the raw amino-acid sequence, 1178 residues long: Leucine--tRNA ligase, cytoplasmic (1178 aa).

Residues Tyr-54 and Tyr-56 each contribute to the L-leucine site. Positions His-62 to His-65 match the 'HIGH' region motif. Ser-169 carries the post-translational modification Phosphoserine. Residues Gly-262 to Glu-511 form an editing domain region. Positions 596 and 599 each coordinate L-leucine. The 'KMSKS' region signature appears at Lys-718–Ser-722. Lys-721 contacts ATP. Residue Ser-722 is modified to Phosphoserine. Residues Lys-972 and Lys-1049 each carry the N6-acetyllysine modification.

It belongs to the class-I aminoacyl-tRNA synthetase family.

The protein resides in the cytoplasm. It catalyses the reaction tRNA(Leu) + L-leucine + ATP = L-leucyl-tRNA(Leu) + AMP + diphosphate. The catalysed reaction is L-methionyl-tRNA(Leu) + H2O = tRNA(Leu) + L-methionine + H(+). Its activity is regulated as follows. 5-fluoro-1,3-dihydro-1-hydroxy-1,2-benzoxaborole inhibits LARS1 by forming a covalent adduct with the 3' adenosine of tRNA(Leu) at the editing site, thus locking the enzyme in an inactive conformation. Aminoacyl-tRNA synthetase that catalyzes the specific attachment of leucine to its cognate tRNA (tRNA(Leu)). It performs tRNA aminoacylation in a two-step reaction: Leu is initially activated by ATP to form a leucyl-adenylate (Leu-AMP) intermediate; then the leucyl moiety is transferred to the acceptor 3' end of the tRNA to yield leucyl-tRNA. To improve the fidelity of catalytic reactions, it is also able to hydrolyze misactivated aminoacyl-adenylate intermediates (pre-transfer editing) and mischarged aminoacyl-tRNAs (post-transfer editing). The polypeptide is Leucine--tRNA ligase, cytoplasmic (Lars1) (Mus musculus (Mouse)).